Here is a 441-residue protein sequence, read N- to C-terminus: Peroxisomal biogenesis factor 3 (441 aa).

The Peroxisomal segment spans residues 1–17 (MAPNQRSRSLLQRHRGK). A helical membrane pass occupies residues 18–39 (VLISLTGIAALFTTGSVVVFFV). The Cytoplasmic portion of the chain corresponds to 40-441 (KRWLYKQQLR…GVSSSFSFKP (402 aa)).

It belongs to the peroxin-3 family. In terms of assembly, interacts with MSP1; leading to inhibit the translocase activity of MSP1.

Its subcellular location is the peroxisome membrane. Functionally, involved in peroxisome biosynthesis. Acts as a regulator of MSP1 by inhibiting the ability of MSP1 to unfold target proteins. This Saccharomyces cerevisiae (strain ATCC 204508 / S288c) (Baker's yeast) protein is Peroxisomal biogenesis factor 3 (PEX3).